Reading from the N-terminus, the 327-residue chain is tRNA uridine(34) hydroxylase (327 aa).

The 97-residue stretch at 122 to 218 folds into the Rhodanese domain; sequence QENRCLVLDV…YGLKMGTGKW (97 aa). C178 (cysteine persulfide intermediate) is an active-site residue.

The protein belongs to the TrhO family.

The catalysed reaction is uridine(34) in tRNA + AH2 + O2 = 5-hydroxyuridine(34) in tRNA + A + H2O. In terms of biological role, catalyzes oxygen-dependent 5-hydroxyuridine (ho5U) modification at position 34 in tRNAs. In Chlamydia trachomatis serovar A (strain ATCC VR-571B / DSM 19440 / HAR-13), this protein is tRNA uridine(34) hydroxylase.